We begin with the raw amino-acid sequence, 500 residues long: Catalase (500 aa).

Residues histidine 59 and asparagine 131 contribute to the active site. Tyrosine 339 provides a ligand contact to heme.

The protein belongs to the catalase family. It depends on heme as a cofactor.

The enzyme catalyses 2 H2O2 = O2 + 2 H2O. Decomposes hydrogen peroxide into water and oxygen; serves to protect cells from the toxic effects of hydrogen peroxide. This is Catalase (katA) from Neisseria gonorrhoeae.